Reading from the N-terminus, the 361-residue chain is Phosphoserine aminotransferase (361 aa).

Arginine 43 provides a ligand contact to L-glutamate. Pyridoxal 5'-phosphate contacts are provided by residues 77-78 (AS), tryptophan 103, threonine 152, aspartate 172, and glutamine 195. N6-(pyridoxal phosphate)lysine is present on lysine 196. 237–238 (NT) contributes to the pyridoxal 5'-phosphate binding site.

Belongs to the class-V pyridoxal-phosphate-dependent aminotransferase family. SerC subfamily. As to quaternary structure, homodimer. Pyridoxal 5'-phosphate serves as cofactor.

It is found in the cytoplasm. The enzyme catalyses O-phospho-L-serine + 2-oxoglutarate = 3-phosphooxypyruvate + L-glutamate. It carries out the reaction 4-(phosphooxy)-L-threonine + 2-oxoglutarate = (R)-3-hydroxy-2-oxo-4-phosphooxybutanoate + L-glutamate. It participates in amino-acid biosynthesis; L-serine biosynthesis; L-serine from 3-phospho-D-glycerate: step 2/3. The protein operates within cofactor biosynthesis; pyridoxine 5'-phosphate biosynthesis; pyridoxine 5'-phosphate from D-erythrose 4-phosphate: step 3/5. Its function is as follows. Catalyzes the reversible conversion of 3-phosphohydroxypyruvate to phosphoserine and of 3-hydroxy-2-oxo-4-phosphonooxybutanoate to phosphohydroxythreonine. The sequence is that of Phosphoserine aminotransferase from Desulfatibacillum aliphaticivorans.